The sequence spans 415 residues: Serine--tRNA ligase (415 aa).

Residue 231-233 coordinates L-serine; it reads TAE. 262–264 lines the ATP pocket; sequence RSE. Glu285 is a binding site for L-serine. Position 349-352 (349-352) interacts with ATP; it reads EISS. Ser383 provides a ligand contact to L-serine.

Belongs to the class-II aminoacyl-tRNA synthetase family. Type-1 seryl-tRNA synthetase subfamily. Homodimer. The tRNA molecule binds across the dimer.

The protein resides in the cytoplasm. It carries out the reaction tRNA(Ser) + L-serine + ATP = L-seryl-tRNA(Ser) + AMP + diphosphate + H(+). The catalysed reaction is tRNA(Sec) + L-serine + ATP = L-seryl-tRNA(Sec) + AMP + diphosphate + H(+). Its pathway is aminoacyl-tRNA biosynthesis; selenocysteinyl-tRNA(Sec) biosynthesis; L-seryl-tRNA(Sec) from L-serine and tRNA(Sec): step 1/1. Its function is as follows. Catalyzes the attachment of serine to tRNA(Ser). Is also able to aminoacylate tRNA(Sec) with serine, to form the misacylated tRNA L-seryl-tRNA(Sec), which will be further converted into selenocysteinyl-tRNA(Sec). This Helicobacter pylori (strain J99 / ATCC 700824) (Campylobacter pylori J99) protein is Serine--tRNA ligase.